We begin with the raw amino-acid sequence, 277 residues long: Phosphatidylglycerol--prolipoprotein diacylglyceryl transferase (277 aa).

4 helical membrane passes run Ile18–Ala38, Ile51–Tyr71, Ile89–Ile109, and Ile116–Gly136. An a 1,2-diacyl-sn-glycero-3-phospho-(1'-sn-glycerol)-binding site is contributed by Arg137. Transmembrane regions (helical) follow at residues Gln177–Ile197, Gly205–Met225, and Phe235–Tyr255.

Belongs to the Lgt family.

It is found in the cell membrane. It carries out the reaction L-cysteinyl-[prolipoprotein] + a 1,2-diacyl-sn-glycero-3-phospho-(1'-sn-glycerol) = an S-1,2-diacyl-sn-glyceryl-L-cysteinyl-[prolipoprotein] + sn-glycerol 1-phosphate + H(+). Its pathway is protein modification; lipoprotein biosynthesis (diacylglyceryl transfer). Catalyzes the transfer of the diacylglyceryl group from phosphatidylglycerol to the sulfhydryl group of the N-terminal cysteine of a prolipoprotein, the first step in the formation of mature lipoproteins. The polypeptide is Phosphatidylglycerol--prolipoprotein diacylglyceryl transferase (Listeria monocytogenes serotype 4b (strain CLIP80459)).